The following is a 235-amino-acid chain: Orotidine 5'-phosphate decarboxylase (235 aa).

Residues Asp-12, Lys-34, 61–70 (DMKLLDIDNT), Thr-116, Arg-177, Gln-186, Gly-206, and Arg-207 contribute to the substrate site. The Proton donor role is filled by Lys-63.

It belongs to the OMP decarboxylase family. Type 1 subfamily. In terms of assembly, homodimer.

It carries out the reaction orotidine 5'-phosphate + H(+) = UMP + CO2. Its pathway is pyrimidine metabolism; UMP biosynthesis via de novo pathway; UMP from orotate: step 2/2. In terms of biological role, catalyzes the decarboxylation of orotidine 5'-monophosphate (OMP) to uridine 5'-monophosphate (UMP). The polypeptide is Orotidine 5'-phosphate decarboxylase (Rhizobium johnstonii (strain DSM 114642 / LMG 32736 / 3841) (Rhizobium leguminosarum bv. viciae)).